Consider the following 176-residue polypeptide: MTTDTHTLHIEEILDLLPHRFPFLLVDRVLDFEEGKFLRAVKNVSFNEPFFQGHFPGKPIFPGVLILEAMAQATGILAFKSRGKLEPGELYYFAGIDEARFKRPVVPGDQMIMEVEFVKERRGLTRFTGVAKVDGEIVCTATMMCARSKPAAPAESVVVKPDVVKPDVVNPVVKES.

Residue H54 is part of the active site.

This sequence belongs to the thioester dehydratase family. FabZ subfamily.

The protein localises to the cytoplasm. It catalyses the reaction a (3R)-hydroxyacyl-[ACP] = a (2E)-enoyl-[ACP] + H2O. Its function is as follows. Involved in unsaturated fatty acids biosynthesis. Catalyzes the dehydration of short chain beta-hydroxyacyl-ACPs and long chain saturated and unsaturated beta-hydroxyacyl-ACPs. The polypeptide is 3-hydroxyacyl-[acyl-carrier-protein] dehydratase FabZ (Yersinia pseudotuberculosis serotype O:1b (strain IP 31758)).